The primary structure comprises 136 residues: S-protein homolog 25 (136 aa).

Positions 1–20 (MNHSVFVILITITYFGLNQA) are cleaved as a signal peptide. N-linked (GlcNAc...) asparagine glycans are attached at residues Asn-71 and Asn-84.

This sequence belongs to the plant self-incompatibility (S1) protein family.

The protein resides in the secreted. The polypeptide is S-protein homolog 25 (Arabidopsis thaliana (Mouse-ear cress)).